A 326-amino-acid chain; its full sequence is Endochitinase (326 aa).

Positions 1 to 25 (MVYCTASLPLLLLLLVGLLAGEAFA) are cleaved as a signal peptide. The region spanning 26–66 (EQCGRQAGGALCPGGLCCSQFGWCGSTSDYCGPTCQSQCGG) is the Chitin-binding type-1 domain. 7 disulfides stabilise this stretch: C28/C43, C37/C49, C42/C56, C60/C64, C96/C158, C170/C178, and C277/C309. The active-site Proton donor is E140.

The protein belongs to the glycosyl hydrolase 19 family. Chitinase class I subfamily. In terms of tissue distribution, expressed in the pulp of the fruit (at protein level). Expressed in mesocarp (at protein level).

It catalyses the reaction Random endo-hydrolysis of N-acetyl-beta-D-glucosaminide (1-&gt;4)-beta-linkages in chitin and chitodextrins.. Its function is as follows. Defense against chitin-containing fungal pathogens. Has in vitro antifungal activity against F.oxysporum inhibiting its growth and the branching of its hyphae. Has endochitinase activity, but no exochitinase or lysozyme activities. In Persea americana (Avocado), this protein is Endochitinase.